The sequence spans 97 residues: Essential MCU regulator, mitochondrial (97 aa).

The transit peptide at 1–37 (MAARMGVLSVAGFRAAARAGGLLARPKQSTAVVPCRT) directs the protein to the mitochondrion. The Mitochondrial matrix portion of the chain corresponds to 38–55 (VIASSAGAILPKPEKVSF). The chain crosses the membrane as a helical span at residues 56-75 (GLLRVFTVVIPFLYIGTLIS). The Mitochondrial intermembrane segment spans residues 76–97 (KNFAAVLEEHDIFVPEDDDDDD).

The protein belongs to the SMDT1/EMRE family. Component of the uniplex complex.

Its subcellular location is the mitochondrion inner membrane. In terms of biological role, essential regulatory subunit of the mitochondrial calcium uniporter complex (uniplex), a complex that mediates calcium uptake into mitochondria. Required to bridge the calcium-sensing proteins micu1 with the calcium-conducting subunit mcu. Acts by mediating activation of mcu and retention of micu1 to the mcu pore, in order to ensure tight regulation of the uniplex complex and appropriate responses to intracellular calcium signaling. This chain is Essential MCU regulator, mitochondrial, found in Xenopus laevis (African clawed frog).